The sequence spans 617 residues: Dihydroxy-acid dehydratase (617 aa).

Mg(2+) is bound at residue Asp81. Position 122 (Cys122) interacts with [2Fe-2S] cluster. 2 residues coordinate Mg(2+): Asp123 and Lys124. Lys124 is modified (N6-carboxylysine). Cys195 contributes to the [2Fe-2S] cluster binding site. Glu491 serves as a coordination point for Mg(2+). Ser517 acts as the Proton acceptor in catalysis.

The protein belongs to the IlvD/Edd family. In terms of assembly, homodimer. [2Fe-2S] cluster serves as cofactor. Mg(2+) is required as a cofactor.

It carries out the reaction (2R)-2,3-dihydroxy-3-methylbutanoate = 3-methyl-2-oxobutanoate + H2O. The enzyme catalyses (2R,3R)-2,3-dihydroxy-3-methylpentanoate = (S)-3-methyl-2-oxopentanoate + H2O. Its pathway is amino-acid biosynthesis; L-isoleucine biosynthesis; L-isoleucine from 2-oxobutanoate: step 3/4. It participates in amino-acid biosynthesis; L-valine biosynthesis; L-valine from pyruvate: step 3/4. Its function is as follows. Functions in the biosynthesis of branched-chain amino acids. Catalyzes the dehydration of (2R,3R)-2,3-dihydroxy-3-methylpentanoate (2,3-dihydroxy-3-methylvalerate) into 2-oxo-3-methylpentanoate (2-oxo-3-methylvalerate) and of (2R)-2,3-dihydroxy-3-methylbutanoate (2,3-dihydroxyisovalerate) into 2-oxo-3-methylbutanoate (2-oxoisovalerate), the penultimate precursor to L-isoleucine and L-valine, respectively. This chain is Dihydroxy-acid dehydratase, found in Buchnera aphidicola subsp. Diuraphis noxia.